Consider the following 248-residue polypeptide: Probable transcriptional regulatory protein SO_2432 (248 aa).

The protein belongs to the TACO1 family.

The protein localises to the cytoplasm. The polypeptide is Probable transcriptional regulatory protein SO_2432 (Shewanella oneidensis (strain ATCC 700550 / JCM 31522 / CIP 106686 / LMG 19005 / NCIMB 14063 / MR-1)).